We begin with the raw amino-acid sequence, 98 residues long: Small ribosomal subunit protein bS6 (98 aa).

The protein belongs to the bacterial ribosomal protein bS6 family.

Its function is as follows. Binds together with bS18 to 16S ribosomal RNA. This chain is Small ribosomal subunit protein bS6, found in Levilactobacillus brevis (strain ATCC 367 / BCRC 12310 / CIP 105137 / JCM 1170 / LMG 11437 / NCIMB 947 / NCTC 947) (Lactobacillus brevis).